Here is a 101-residue protein sequence, read N- to C-terminus: NAD(P)H-quinone oxidoreductase subunit 4L, chloroplastic (101 aa).

A run of 3 helical transmembrane segments spans residues 2 to 22, 32 to 52, and 61 to 81; these read MLEHVLVLSAYLLSIGIYGLI, MCLELILNAVNMNFVTFSDLF, and IFSIFVIAIAAAEAAIGLAIV.

This sequence belongs to the complex I subunit 4L family. NDH is composed of at least 16 different subunits, 5 of which are encoded in the nucleus.

The protein resides in the plastid. It is found in the chloroplast thylakoid membrane. It carries out the reaction a plastoquinone + NADH + (n+1) H(+)(in) = a plastoquinol + NAD(+) + n H(+)(out). The catalysed reaction is a plastoquinone + NADPH + (n+1) H(+)(in) = a plastoquinol + NADP(+) + n H(+)(out). In terms of biological role, NDH shuttles electrons from NAD(P)H:plastoquinone, via FMN and iron-sulfur (Fe-S) centers, to quinones in the photosynthetic chain and possibly in a chloroplast respiratory chain. The immediate electron acceptor for the enzyme in this species is believed to be plastoquinone. Couples the redox reaction to proton translocation, and thus conserves the redox energy in a proton gradient. This Nandina domestica (Heavenly bamboo) protein is NAD(P)H-quinone oxidoreductase subunit 4L, chloroplastic.